A 252-amino-acid chain; its full sequence is Short-chain dehydrogenase/reductase eriH (252 aa).

Residues isoleucine 16, aspartate 65, asparagine 92, lysine 125, tyrosine 158, lysine 162, valine 191, and threonine 193 each coordinate NADP(+). The Proton acceptor role is filled by tyrosine 158. Tyrosine 158 (proton donor) is an active-site residue. Lysine 162 functions as the Lowers pKa of active site Tyr in the catalytic mechanism.

Belongs to the short-chain dehydrogenases/reductases (SDR) family.

The enzyme catalyses cyathadiol + reduced [NADPH--hemoprotein reductase] + O2 = cyathatriol + oxidized [NADPH--hemoprotein reductase] + H2O + H(+). It carries out the reaction 11-O-acetylcyathatriol + A = 11-O-acetylcyathin A3 + AH2. The catalysed reaction is cyathatriol + A = cyathin A3 + AH2. The protein operates within secondary metabolite biosynthesis. Short-chain dehydrogenase/reductase; part of the gene cluster that mediates the biosynthesis of erinacines, cyathane-xylosides that show unique biological activities, including leishmanicidal activity, stimulating activity for nerve growth-factor synthesis, and agonistic activity toward the kappa opioid receptor. Within the pathway, eriH works with eriA to catalyze C-11 hydroxylation of cyathadiol to produce cyathatriol. EriH also catalyzes oxidation of 11-O-acetyl-cyathatriol into 1-O-acetylcyathin A3. In the absence of eriL and eriJ, the SDR eriH is able to convert cyathatriol to cyathin A3; this is likely a switching mechanism in the biosynthesis of cyathins (C-14 ketogroup)and erinacines (C-14 glycosylated group). The first step of the erinacines biosynthesis pathway is catalyzed by the geranylgeranyl diphosphate (GGPP) synthase eriE via conversion of farnesyl pyrophosphate and isopentyl pyrophosphate into geranylgeranyl pyrophosphate (GGPP). GGPP is then substrate of the diterpene cyclase eriG for the production of cyatha-3,12-diene. The cytochrome P450 monooxygenase eriI then hydroxylates cyatha-3,12-diene at C-14 of the seven-membered ring to produce erinacol, which is further hydroxylated at C-15 by the cytochrome P450 monooxygenase eriC to yield cyathadiol. The cytochrome P450 monooxygenase eriA then catalyzes C-11 hydroxylation in the presence of the short chain dehydrogenase/reductase (SDR) eriH, which leads to the production of cyathatriol. The acetyltransferase eriL converts cyathatriol into 11-O-acetyl-cyathatriol. The SDR eriH catalyzes further oxidation of 11-O-acetyl-cyathatriol into 1-O-acetylcyathin A3. Finally, the glycosyl transferase eriJ tranfers xylose from UDP-xylose onto C-14 of 11-O-acetyl-cyathatriol to form eracine Q. EriJ is also able to convert 11-O-acetyl-cyathatriol to eracine Q2 by using UDP-D-glucose as cosubstrate, but at a lower rate. This is Short-chain dehydrogenase/reductase eriH from Hericium erinaceus (Lion's mane mushroom).